Here is a 69-residue protein sequence, read N- to C-terminus: MKAIISLLLISAMVFSMIEAVPVXXGLQLFESERGCLPHNRFCNALSGPRCCSRLKCKELSIWDSRCLG.

The signal sequence occupies residues 1-20 (MKAIISLLLISAMVFSMIEA). The propeptide occupies 21-34 (VPVXXGLQLFESER). 3 disulfide bridges follow: cysteine 36–cysteine 52, cysteine 43–cysteine 57, and cysteine 51–cysteine 67. Leucine amide is present on leucine 68.

The protein belongs to the neurotoxin 01 (U2-agtx) family. In terms of tissue distribution, expressed by the venom gland.

The protein localises to the secreted. Its function is as follows. Insect active toxin causing rapid but reversible paralysis in crickets. No activity shown in mammals. Does not show effect on mammalian voltage-gated calcium channels. The sequence is that of U2-agatoxin-Ao1i from Agelena orientalis (Funnel-web spider).